Here is a 248-residue protein sequence, read N- to C-terminus: Tropomyosin alpha-4 chain (248 aa).

Residue Ala-2 is modified to N-acetylalanine. Residues Ala-2–Ile-248 adopt a coiled-coil conformation. Ser-6 carries the phosphoserine modification. The disordered stretch occupies residues Ala-16–Gly-47. The segment covering Arg-33–Gly-47 has biased composition (basic and acidic residues). Lys-177 and Lys-215 each carry N6-acetyllysine. A Phosphothreonine modification is found at Thr-216.

It belongs to the tropomyosin family. As to quaternary structure, homodimer. Heterodimer of an alpha (TPM1, TPM3 or TPM4) and a beta (TPM2) chain.

The protein resides in the cytoplasm. It localises to the cytoskeleton. In terms of biological role, binds to actin filaments in muscle and non-muscle cells. Plays a central role, in association with the troponin complex, in the calcium dependent regulation of vertebrate striated muscle contraction. Smooth muscle contraction is regulated by interaction with caldesmon. In non-muscle cells is implicated in stabilizing cytoskeleton actin filaments. Binds calcium. This chain is Tropomyosin alpha-4 chain (TPM4), found in Equus caballus (Horse).